A 540-amino-acid polypeptide reads, in one-letter code: L-aspartate oxidase (540 aa).

FAD contacts are provided by residues 16–19 (SGAA), lysine 38, 45–52 (STFYAQGG), 161–162 (NA), and aspartate 223. Residues histidine 244 and 259 to 260 (TE) contribute to the succinate site. Arginine 290 acts as the Proton donor/acceptor in catalysis. Glutamate 375 contacts FAD. Serine 389 contacts succinate. 391–392 (SL) lines the FAD pocket.

It belongs to the FAD-dependent oxidoreductase 2 family. NadB subfamily. In terms of assembly, monomer. Homodimer. Both the monomeric and dimeric forms of the enzyme are catalytically active. It depends on FAD as a cofactor.

Its subcellular location is the cytoplasm. The enzyme catalyses L-aspartate + O2 = iminosuccinate + H2O2. It carries out the reaction fumarate + L-aspartate = iminosuccinate + succinate. It participates in cofactor biosynthesis; NAD(+) biosynthesis; iminoaspartate from L-aspartate (oxidase route): step 1/1. Its activity is regulated as follows. Inhibited by the product iminoaspartate. Competitively inhibited by mesotartrate. NAD acts as a competitive inhibitor to FAD. Inhibited by iodoacetic acid, diethylpyrocarbonate and tetranitromethane. Catalyzes the oxidation of L-aspartate to iminoaspartate, the first step in the de novo biosynthesis of NAD(+). Can use either oxygen or fumarate as electron acceptors, which allows the enzyme to be functional under aerobic and anaerobic conditions. In vivo, fumarate is used under anaerobic conditions, and oxygen is the predominant electron acceptor under aerobic conditions due to the lower fumarate levels. In vitro, fumarate is a more efficient electron acceptor and is kinetically superior to oxygen. The sequence is that of L-aspartate oxidase from Escherichia coli (strain K12).